Here is a 94-residue protein sequence, read N- to C-terminus: MLKPLGDRIVIEVVKKEETTLGGIVLPGSAKEKPQEGKVVAVGTGRVTEQGVRVPLEVNVGDHVIYAQYAGSEVKVDGNEYLILRESDILAVAN.

It belongs to the GroES chaperonin family. As to quaternary structure, heptamer of 7 subunits arranged in a ring. Interacts with the chaperonin GroEL.

The protein resides in the cytoplasm. In terms of biological role, together with the chaperonin GroEL, plays an essential role in assisting protein folding. The GroEL-GroES system forms a nano-cage that allows encapsulation of the non-native substrate proteins and provides a physical environment optimized to promote and accelerate protein folding. GroES binds to the apical surface of the GroEL ring, thereby capping the opening of the GroEL channel. In Exiguobacterium sibiricum (strain DSM 17290 / CCUG 55495 / CIP 109462 / JCM 13490 / 255-15), this protein is Co-chaperonin GroES.